A 338-amino-acid polypeptide reads, in one-letter code: Ornithine carbamoyltransferase (338 aa).

The residue at position 2 (serine 2) is an N-acetylserine. Residues 67-70, arginine 118, histidine 145, and glutamine 148 each bind carbamoyl phosphate; that span reads STRT. 4 residues coordinate L-ornithine: asparagine 185, aspartate 249, serine 253, and methionine 254. Cysteine 289 functions as the Proton acceptor in the catalytic mechanism. Residues 289-290 and arginine 316 each bind carbamoyl phosphate; that span reads CL.

This sequence belongs to the aspartate/ornithine carbamoyltransferase superfamily. OTCase family. In terms of assembly, interacts with CAR1.

Its subcellular location is the cytoplasm. It catalyses the reaction carbamoyl phosphate + L-ornithine = L-citrulline + phosphate + H(+). It participates in amino-acid biosynthesis; L-arginine biosynthesis; L-arginine from L-ornithine and carbamoyl phosphate: step 1/3. With respect to regulation, forms a stable complex with CAR1 in the presence of ornithine and arginine. In this complex CAR1 retains activity, but ARG3 activity is inhibited. This Saccharomyces cerevisiae (strain ATCC 204508 / S288c) (Baker's yeast) protein is Ornithine carbamoyltransferase (ARG3).